A 318-amino-acid chain; its full sequence is C1GALT1-specific chaperone 1 (318 aa).

Topologically, residues Met-1–Ser-6 are cytoplasmic. Residues Ser-7–Gly-26 form a helical; Signal-anchor for type II membrane protein membrane-spanning segment. Over His-27 to Asp-318 the chain is Lumenal.

It belongs to the glycosyltransferase 31 family. Beta3-Gal-T subfamily. Associates with core 1 beta-3-galactosyltransferase (C1GALT1), probably not with the soluble active form.

It localises to the membrane. In terms of biological role, probable chaperone required for the generation of 1 O-glycan Gal-beta1-3GalNAc-alpha1-Ser/Thr (T antigen), which is a precursor for many extended O-glycans in glycoproteins. Probably acts as a specific molecular chaperone assisting the folding/stability of core 1 beta-3-galactosyltransferase (C1GALT1). The polypeptide is C1GALT1-specific chaperone 1 (C1GALT1C1) (Bos taurus (Bovine)).